The chain runs to 607 residues: ENTH domain-containing protein 1 (607 aa).

The region spanning Asn9–Arg141 is the ENTH domain. Residues Glu543–Asn574 are a coiled coil.

In Homo sapiens (Human), this protein is ENTH domain-containing protein 1 (ENTHD1).